The sequence spans 173 residues: NADH-quinone oxidoreductase subunit I 1 (173 aa).

2 consecutive 4Fe-4S ferredoxin-type domains span residues 41–73 and 83–112; these read IVLT…LAKA and EHFR…LTPD. The [4Fe-4S] cluster site is built by C53, C56, C59, C63, C92, C95, C98, and C102.

Belongs to the complex I 23 kDa subunit family. In terms of assembly, NDH-1 is composed of 14 different subunits. Subunits NuoA, H, J, K, L, M, N constitute the membrane sector of the complex. [4Fe-4S] cluster is required as a cofactor.

The protein localises to the cell inner membrane. The catalysed reaction is a quinone + NADH + 5 H(+)(in) = a quinol + NAD(+) + 4 H(+)(out). Its function is as follows. NDH-1 shuttles electrons from NADH, via FMN and iron-sulfur (Fe-S) centers, to quinones in the respiratory chain. The immediate electron acceptor for the enzyme in this species is believed to be ubiquinone. Couples the redox reaction to proton translocation (for every two electrons transferred, four hydrogen ions are translocated across the cytoplasmic membrane), and thus conserves the redox energy in a proton gradient. In Rhodopseudomonas palustris (strain BisA53), this protein is NADH-quinone oxidoreductase subunit I 1.